The sequence spans 561 residues: 4-coumarate--CoA ligase 1 (561 aa).

6 residues coordinate ATP: Ser-210, Ser-211, Gly-212, Thr-213, Thr-214, and Lys-218. (E)-4-coumaroyl-AMP-binding residues include Tyr-260 and Ser-264. Lys-281 contributes to the CoA binding site. The segment at 283-352 is SBD1; the sequence is EINLLLELIQ…AKFPNAKLGQ (70 aa). 5 residues coordinate (E)-4-coumaroyl-AMP: Ala-330, Gln-352, Gly-353, Thr-357, and Met-365. Positions 352, 353, and 357 each coordinate ATP. The segment at 353–420 is SBD2; it reads GYGMTEAGPV…IRGHQIMKGY (68 aa). ATP-binding residues include Asp-441 and Arg-456. The (E)-4-coumaroyl-AMP site is built by Lys-458 and Lys-462. 2 residues coordinate CoA: Lys-464 and Gly-465. ATP is bound at residue Lys-547.

This sequence belongs to the ATP-dependent AMP-binding enzyme family. The cofactor is Mg(2+). As to expression, preferentially expressed in roots, bolting stems and siliques. Also detected in leaves.

It catalyses the reaction (E)-4-coumarate + ATP + CoA = (E)-4-coumaroyl-CoA + AMP + diphosphate. It carries out the reaction (E)-caffeate + ATP + CoA = (E)-caffeoyl-CoA + AMP + diphosphate. The enzyme catalyses (E)-ferulate + ATP + CoA = (E)-feruloyl-CoA + AMP + diphosphate. The catalysed reaction is (E)-4-coumarate + ATP + H(+) = (E)-4-coumaroyl-AMP + diphosphate. It catalyses the reaction (E)-4-coumaroyl-AMP + CoA = (E)-4-coumaroyl-CoA + AMP + H(+). It carries out the reaction (E)-caffeate + ATP + H(+) = (E)-caffeoyl-AMP + diphosphate. The enzyme catalyses (E)-caffeoyl-AMP + CoA = (E)-caffeoyl-CoA + AMP + H(+). The catalysed reaction is (E)-ferulate + ATP + H(+) = (E)-feruloyl-AMP + diphosphate. It catalyses the reaction (E)-feruloyl-AMP + CoA = (E)-feruloyl-CoA + AMP + H(+). Its pathway is phytoalexin biosynthesis; 3,4',5-trihydroxystilbene biosynthesis; 3,4',5-trihydroxystilbene from trans-4-coumarate: step 1/2. In terms of biological role, produces CoA thioesters of a variety of hydroxy- and methoxy-substituted cinnamic acids, which are used to synthesize several phenylpropanoid-derived compounds, including anthocyanins, flavonoids, isoflavonoids, coumarins, lignin, suberin and wall-bound phenolics. Follows a two-step reaction mechanism, wherein the carboxylate substrate first undergoes adenylation by ATP, followed by a thioesterification in the presence of CoA to yield the final CoA thioesters. This chain is 4-coumarate--CoA ligase 1, found in Arabidopsis thaliana (Mouse-ear cress).